Here is a 407-residue protein sequence, read N- to C-terminus: Carbamoyl phosphate synthase small chain (407 aa).

The segment at 1–203 is CPSase; it reads MSQNESGTIA…EPCGEYEGKE (203 aa). Residues S61, G255, and G257 each coordinate L-glutamine. The region spanning 207 to 405 is the Glutamine amidotransferase type-1 domain; the sequence is TVAAVDLGIK…CELMKNNSKE (199 aa). C283 functions as the Nucleophile in the catalytic mechanism. Positions 284, 287, 325, 327, and 328 each coordinate L-glutamine. Catalysis depends on residues H378 and E380.

Belongs to the CarA family. Composed of two chains; the small (or glutamine) chain promotes the hydrolysis of glutamine to ammonia, which is used by the large (or ammonia) chain to synthesize carbamoyl phosphate. Tetramer of heterodimers (alpha,beta)4.

The catalysed reaction is hydrogencarbonate + L-glutamine + 2 ATP + H2O = carbamoyl phosphate + L-glutamate + 2 ADP + phosphate + 2 H(+). It catalyses the reaction L-glutamine + H2O = L-glutamate + NH4(+). It participates in amino-acid biosynthesis; L-arginine biosynthesis; carbamoyl phosphate from bicarbonate: step 1/1. The protein operates within pyrimidine metabolism; UMP biosynthesis via de novo pathway; (S)-dihydroorotate from bicarbonate: step 1/3. Small subunit of the glutamine-dependent carbamoyl phosphate synthetase (CPSase). CPSase catalyzes the formation of carbamoyl phosphate from the ammonia moiety of glutamine, carbonate, and phosphate donated by ATP, constituting the first step of 2 biosynthetic pathways, one leading to arginine and/or urea and the other to pyrimidine nucleotides. The small subunit (glutamine amidotransferase) binds and cleaves glutamine to supply the large subunit with the substrate ammonia. The chain is Carbamoyl phosphate synthase small chain from Bifidobacterium longum (strain DJO10A).